The following is a 96-amino-acid chain: Glycine-rich protein DC7.1 (96 aa).

Positions 1–25 are cleaved as a signal peptide; sequence MGSKIFLLLGLSIAFALLISSEVAA. The segment at 29 to 66 is disordered; that stretch reads SETTTEGASLDGGHHGGGGGGHYSGGGGHGGSHHGGGG. 2 consecutive repeat copies span residues 42–50 and 61–67. The tract at residues 42 to 67 is 2 approximate repeats of H-H-G(4,6)-H; sequence HHGGGGGGHYSGGGGHGGSHHGGGGH. Over residues 43–66 the composition is skewed to gly residues; that stretch reads HGGGGGGHYSGGGGHGGSHHGGGG.

The protein belongs to the GRP family.

In terms of biological role, may be connected with the initiation of embryogenesis or with the metabolic changes produced by the removal of auxins. In Daucus carota (Wild carrot), this protein is Glycine-rich protein DC7.1.